We begin with the raw amino-acid sequence, 975 residues long: FHF complex subunit HOOK-interacting protein 1B (975 aa).

The tract at residues 465–496 (APSPPRPEHASWARGPGSPSVDSSSVVTVPRP) is disordered. Ser467 carries the phosphoserine modification. Residues 482–496 (SPSVDSSSVVTVPRP) show a composition bias toward low complexity. 4 positions are modified to phosphoserine: Ser510, Ser523, Ser529, and Ser533. Disordered stretches follow at residues 511–548 (LGGS…GELE), 573–621 (SAPY…GLAV), and 690–717 (SNGG…SFTC). Over residues 527-538 (TASPTSSPSRRP) the composition is skewed to low complexity. The span at 597–608 (LLPEEDRDNVRE) shows a compositional bias: basic and acidic residues. Ser863 carries the phosphoserine modification. Thr892 carries the post-translational modification Phosphothreonine. Ser900 carries the phosphoserine modification.

It belongs to the FHIP family. In terms of assembly, component of the FTS/Hook/FHIP complex (FHF complex), composed of AKTIP/FTS, FHIP1B, and one or more members of the Hook family of proteins HOOK1, HOOK2, and HOOK3. The FHF complex associates with the homotypic vesicular sorting complex (the HOPS complex).

In terms of biological role, component of the FTS/Hook/FHIP complex (FHF complex). The FHF complex may function to promote vesicle trafficking and/or fusion via the homotypic vesicular protein sorting complex (the HOPS complex). FHF complex promotes the distribution of AP-4 complex to the perinuclear area of the cell. This chain is FHF complex subunit HOOK-interacting protein 1B, found in Mus musculus (Mouse).